An 830-amino-acid chain; its full sequence is Probable mixed-linked glucan synthase 7 (830 aa).

Transmembrane regions (helical) follow at residues 61–81 (LTIF…ITYA) and 98–118 (AATF…MWVL). The active site involves Asp186. Residues 251–279 (ELVRDRRRVRREYEEMRLRIDALQAADAR) adopt a coiled-coil conformation. Residues Asp367 and Asp369 each coordinate substrate. Asp529 is a catalytic residue. Transmembrane regions (helical) follow at residues 613–633 (LFLM…GGGW), 638–658 (TPTY…VAVL), 676–696 (FWMV…ALKV), 735–755 (ALMA…AAAG), 776–796 (LPVA…LGLM), and 805–825 (PILF…CLLL).

Belongs to the glycosyltransferase 2 family. Plant cellulose synthase-like F subfamily. In terms of tissue distribution, expressed in mature pollen.

The protein localises to the golgi apparatus membrane. Functionally, may catalyze both beta-1,3 and beta-1,4 glycosidic linkage on beta-D-glucan. Essential for (1,3;1,4)-beta-D-glucans synthesis in grasses and cereals (Poaceae). The mixed-linked glucans (which are not present in walls of dicotyledons or most other monocotyledonous plants) are particularly important constituents of the walls of the starchy endosperm and aleurone cells of cereal grains such as oats, wheat, rice and barley. They can account for up to 70% by weight of the wall. In Oryza sativa subsp. japonica (Rice), this protein is Probable mixed-linked glucan synthase 7 (CSLF7).